The primary structure comprises 535 residues: Interferon lambda receptor 1 (535 aa).

An N-terminal signal peptide occupies residues 1–20 (MWRADRWAPLLLFLLQSALG). Residues 21-227 (RPRLAPPRNV…FLEAPGDKRA (207 aa)) lie on the Extracellular side of the membrane. The Fibronectin type-III domain occupies 26-121 (PPRNVTLFSQ…ESRYLEYLFD (96 aa)). Residues N29, N36, and N52 are each glycosylated (N-linked (GlcNAc...) asparagine). Intrachain disulfides connect C73-C81, C85-C149, and C194-C216. A glycan (N-linked (GlcNAc...) asparagine) is linked at N141. The helical transmembrane segment at 228 to 248 (VLAMPSLLLLLIAAVAAGVAW) threads the bilayer. Topologically, residues 249-535 (KIMKGNPWFQ…GRMLGDYLVR (287 aa)) are cytoplasmic. 2 disordered regions span residues 301-419 (NRPA…APCG) and 478-520 (VNNP…SSVQ). Positions 321–336 (STEDEDEDTDYDDDGD) are enriched in acidic residues. Residues 350–360 (EKPRVMEHSET) are compositionally biased toward basic and acidic residues. Low complexity predominate over residues 376 to 396 (GSDGSSAWDSSDRSWSSTGDS). Over residues 397–414 (SYKDEVGSSSCLDRKEPD) the composition is skewed to basic and acidic residues. Positions 482-503 (EGEEEQEDEEEEEEEEEEEDWE) are enriched in acidic residues.

It belongs to the type II cytokine receptor family. As to quaternary structure, heterodimer with IL10RB. Post-translationally, ubiquitinated by FBXO45-containing E3 ligase leading to proteasomal degradation.

The protein localises to the membrane. In terms of biological role, the IFNLR1/IL10RB dimer is a receptor for the cytokine ligands IFNL2 and IFNL3 and mediates their antiviral activity. The ligand/receptor complex stimulate the activation of the JAK/STAT signaling pathway leading to the expression of IFN-stimulated genes (ISG), which contribute to the antiviral state. Determines the cell type specificity of the lambda interferon action. Shows a more restricted pattern of expression in the epithelial tissues thereby limiting responses to lambda interferons primarily to epithelial cells of the respiratory, gastrointestinal, and reproductive tracts. Seems not to be essential for early virus-activated host defense in vaginal infection, but plays an important role in Toll-like receptor (TLR)-induced antiviral defense. Plays a significant role in the antiviral immune defense in the intestinal epithelium. The protein is Interferon lambda receptor 1 (Ifnlr1) of Mus musculus (Mouse).